A 373-amino-acid polypeptide reads, in one-letter code: D-amino-acid transaminase, chloroplastic (373 aa).

Residues methionine 1–leucine 57 constitute a chloroplast transit peptide. A pyridoxal 5'-phosphate-binding site is contributed by arginine 128. The active-site Proton acceptor is lysine 222. Lysine 222 carries the N6-(pyridoxal phosphate)lysine modification. Glutamate 255 lines the pyridoxal 5'-phosphate pocket.

It belongs to the class-IV pyridoxal-phosphate-dependent aminotransferase family. Homodimer. It depends on pyridoxal 5'-phosphate as a cofactor.

The protein resides in the plastid. It is found in the chloroplast. The enzyme catalyses D-alanine + 2-oxoglutarate = D-glutamate + pyruvate. It carries out the reaction 4-amino-4-deoxychorismate = 4-aminobenzoate + pyruvate + H(+). The protein operates within cofactor biosynthesis; tetrahydrofolate biosynthesis; 4-aminobenzoate from chorismate: step 2/2. Inhibited by hydroxylamine or amino-oxyacetic acid. Amino acid aminotransferase showing activity for D-Asp and D-Ala as amino donors with 2-oxoglutarate as an amino acceptor. Can also use D-Met, D-Tyr, D-Phe, D-Gln, D-Trp and D-Asn as substrates, but no activity with L-Asp, L-Ala, L-Leu, L-Ile or L-Val. Also catalyzes the reverse reaction where an amino group is transferred from D-Glu to pyruvate or oxaloacetate to produce D-Ala or D-Asp, respectively. Also involved in folate biosynthesis, acting as an aminodeoxychorismate lyase converting 4-amino-4-deoxychorismate (ADC) to p-aminobenzoate (PABA). This is D-amino-acid transaminase, chloroplastic from Arabidopsis thaliana (Mouse-ear cress).